The chain runs to 364 residues: MKKKYRIAVLPGDGIGPEVMQEAYKILNILKDHFLLPLEMKEFNIGGIAIDQEGIALPKNTLLGCENSDAILFGSVGGKKWDYLSIDKRPERAALLPLRKHFNLFSNLRPAKLYADLKYLSPLRSNIIKDGFDILCVRELTGGIYFGKPNGHSKKNDIEYAFDTEVYYDYEISRIAHLAFQLARNRKKKVCSLDKSNVLKSSILWKEIVEKISKNYPDVHLSHLYIDNAIMQIIKDPSQFDVILCSNLFGDIVSDECAAITGSIGMLPSASLNEKNFGLYEPAGGSAPDIAGKNIANPIAQILSVSMLVRHGMNLKKIADKIDESVVSVLKQGYRTADISNNSHNYLKTSEMGDIIANFLINGK.

78-91 (GKKWDYLSIDKRPE) is a binding site for NAD(+). Residues Arg99, Arg109, Arg138, and Asp227 each contribute to the substrate site. Positions 227, 251, and 255 each coordinate Mg(2+). 285 to 297 (GSAPDIAGKNIAN) provides a ligand contact to NAD(+).

This sequence belongs to the isocitrate and isopropylmalate dehydrogenases family. LeuB type 1 subfamily. Homodimer. Mg(2+) serves as cofactor. Requires Mn(2+) as cofactor.

The protein resides in the cytoplasm. The enzyme catalyses (2R,3S)-3-isopropylmalate + NAD(+) = 4-methyl-2-oxopentanoate + CO2 + NADH. Its pathway is amino-acid biosynthesis; L-leucine biosynthesis; L-leucine from 3-methyl-2-oxobutanoate: step 3/4. Catalyzes the oxidation of 3-carboxy-2-hydroxy-4-methylpentanoate (3-isopropylmalate) to 3-carboxy-4-methyl-2-oxopentanoate. The product decarboxylates to 4-methyl-2 oxopentanoate. The polypeptide is 3-isopropylmalate dehydrogenase (Buchnera aphidicola subsp. Uroleucon erigeronensis).